A 75-amino-acid polypeptide reads, in one-letter code: U6-lycotoxin-Ls1f (75 aa).

The first 21 residues, 1–21 (MKLLLFTALVLVVISLVEVEA), serve as a signal peptide directing secretion. A propeptide spanning residues 22–25 (ENER) is cleaved from the precursor.

It belongs to the neurotoxin 19 (CSTX) family. 06 (U6-Lctx) subfamily. Contains 4 disulfide bonds. Expressed by the venom gland.

It is found in the secreted. The chain is U6-lycotoxin-Ls1f from Lycosa singoriensis (Wolf spider).